Here is a 462-residue protein sequence, read N- to C-terminus: Fumarate hydratase class II (462 aa).

Substrate contacts are provided by residues S98–T100, R126, H129–D132, S139–N141, and T187. The segment at G120–N141 is disordered. Catalysis depends on H188, which acts as the Proton donor/acceptor. S318 is an active-site residue. Substrate-binding positions include S319 and K324–N326.

The protein belongs to the class-II fumarase/aspartase family. Fumarase subfamily. Homotetramer.

The protein localises to the cytoplasm. The catalysed reaction is (S)-malate = fumarate + H2O. It participates in carbohydrate metabolism; tricarboxylic acid cycle; (S)-malate from fumarate: step 1/1. In terms of biological role, involved in the TCA cycle. Catalyzes the stereospecific interconversion of fumarate to L-malate. The protein is Fumarate hydratase class II of Nitrosomonas europaea (strain ATCC 19718 / CIP 103999 / KCTC 2705 / NBRC 14298).